Here is a 295-residue protein sequence, read N- to C-terminus: GTPase Era (295 aa).

Residues 5–172 form the Era-type G domain; the sequence is YCGYAAIIGR…EQAVHQLMPE (168 aa). The tract at residues 13-20 is G1; the sequence is GRPNVGKS. 13–20 provides a ligand contact to GTP; it reads GRPNVGKS. The segment at 39–43 is G2; it reads QTTRY. A G3 region spans residues 60–63; sequence DTPG. Residues 60–64 and 121–124 each bind GTP; these read DTPGL and NKVD. Positions 121–124 are G4; the sequence is NKVD. The segment at 151–153 is G5; that stretch reads LSA. One can recognise a KH type-2 domain in the interval 203–279; sequence LGQEIPYSLA…FLQLWVKVKS (77 aa).

The protein belongs to the TRAFAC class TrmE-Era-EngA-EngB-Septin-like GTPase superfamily. Era GTPase family. Monomer.

Its subcellular location is the cytoplasm. The protein resides in the cell inner membrane. An essential GTPase that binds both GDP and GTP, with rapid nucleotide exchange. Plays a role in 16S rRNA processing and 30S ribosomal subunit biogenesis and possibly also in cell cycle regulation and energy metabolism. This chain is GTPase Era, found in Coxiella burnetii (strain RSA 331 / Henzerling II).